Reading from the N-terminus, the 371-residue chain is Anhydro-N-acetylmuramic acid kinase (371 aa).

9–16 serves as a coordination point for ATP; the sequence is GTSMDGID.

It belongs to the anhydro-N-acetylmuramic acid kinase family.

The catalysed reaction is 1,6-anhydro-N-acetyl-beta-muramate + ATP + H2O = N-acetyl-D-muramate 6-phosphate + ADP + H(+). It participates in amino-sugar metabolism; 1,6-anhydro-N-acetylmuramate degradation. It functions in the pathway cell wall biogenesis; peptidoglycan recycling. Its function is as follows. Catalyzes the specific phosphorylation of 1,6-anhydro-N-acetylmuramic acid (anhMurNAc) with the simultaneous cleavage of the 1,6-anhydro ring, generating MurNAc-6-P. Is required for the utilization of anhMurNAc either imported from the medium or derived from its own cell wall murein, and thus plays a role in cell wall recycling. The polypeptide is Anhydro-N-acetylmuramic acid kinase (Azorhizobium caulinodans (strain ATCC 43989 / DSM 5975 / JCM 20966 / LMG 6465 / NBRC 14845 / NCIMB 13405 / ORS 571)).